A 319-amino-acid polypeptide reads, in one-letter code: MAKVPSVTLSSCGDDIQTMPVIGMGTSSYPRADPETAKAAILEAIRAGYRHFDTAAAYGSEKDLGEAIAEALRLQLIKSRDELFITTKLWASFAEKDLVLPSIKASLSNLQVEYIDMYIIHWPFKLGKEVRTMPVERDLVQPLDIKSVWEAMEECKKLGLARGIGVSNFTSSMLEELLSFAEIPPAVNQLEMNPAWQLKKLRDFCKAKGIHVTAYSPLGAARTKWGDDRVLGSDIIEEIAQAKGKSTAQISLRWVYEQGVSIVTKSYNKERMRQNLDIFDFCLTEEELEKMSHLPQRKGVTFASILGPHDIVLEVDEEL.

Tyr-58 acts as the Proton donor in catalysis. His-121 is a binding site for substrate. An NADP(+)-binding site is contributed by 216-275 (SPLGAARTKWGDDRVLGSDIIEEIAQAKGKSTAQISLRWVYEQGVSIVTKSYNKERMRQN).

Belongs to the aldo/keto reductase family. In terms of tissue distribution, expressed specifically in the receptacle tissue of the fruit.

The enzyme catalyses L-galactonate + NADP(+) = aldehydo-D-galacturonate + NADPH + H(+). The protein operates within cofactor biosynthesis; L-ascorbate biosynthesis. Its function is as follows. Involved in ascorbic acid (vitamin C) biosynthesis. The sequence is that of D-galacturonate reductase (GALUR) from Fragaria ananassa (Strawberry).